A 591-amino-acid polypeptide reads, in one-letter code: ATP-dependent lipid A-core flippase (591 aa).

Helical transmembrane passes span Leu34 to Ile54, Ile71 to Phe91, Leu158 to Ile178, Leu258 to Leu278, and Thr285 to Ile305. The ABC transmembrane type-1 domain maps to Ile35–Lys317. An ABC transporter domain is found at Ile350–Met586. Residue Gly384–Thr391 coordinates ATP.

Belongs to the ABC transporter superfamily. Lipid exporter (TC 3.A.1.106) family. Homodimer.

It is found in the cell inner membrane. It carries out the reaction ATP + H2O + lipid A-core oligosaccharideSide 1 = ADP + phosphate + lipid A-core oligosaccharideSide 2.. Functionally, involved in lipopolysaccharide (LPS) biosynthesis. Translocates lipid A-core from the inner to the outer leaflet of the inner membrane. Transmembrane domains (TMD) form a pore in the inner membrane and the ATP-binding domain (NBD) is responsible for energy generation. The sequence is that of ATP-dependent lipid A-core flippase from Bordetella avium (strain 197N).